A 165-amino-acid chain; its full sequence is AILTGVPYYILPSTSRAGFSPDNLRKNTSQLSCPLDLITQLRFPRRIGVPVIFTPQNSSLKVVPLSHNLNIHTCSDLWFCPESKIWTVKSSLTHGGSVVTTGGTFRSLGSWFRIERHGDSYKLVHCPRGSTPCRDVGIETVGGGGRRYLAPRDRPLAVRFTRASG.

2 N-linked (GlcNAc...) asparagine glycosylation sites follow: Asn-27 and Asn-57. Cystine bridges form between Cys-33-Cys-80 and Cys-126-Cys-133.

The protein belongs to the protease inhibitor I3 (leguminous Kunitz-type inhibitor) family. In terms of assembly, dimer.

Functionally, glucose and N-acetylglucosamine binding lectin. Has hemagglutinating activity against human and rabbit erythrocytes which does not require divalent cations. Inhibits factor Xa and, to a lesser extent, trypsin. Does not inhibit neutrophil elastase, human plasma kallikrein, papain, human plasmin, porcine pancreatic kallikrein and bovin chymotrypsin. Has insecticidal activity against the termite species N.corniger. Induces apoptosis in prostrate cancer cell lines DU145 and PC3. In Crateva tapia (Garlic-pear tree), this protein is Bark lectin isoform 2.